The following is a 312-amino-acid chain: Ribosomal protein L11 methyltransferase (312 aa).

Thr-163, Gly-184, Asp-206, and Asn-248 together coordinate S-adenosyl-L-methionine.

This sequence belongs to the methyltransferase superfamily. PrmA family.

The protein localises to the cytoplasm. The enzyme catalyses L-lysyl-[protein] + 3 S-adenosyl-L-methionine = N(6),N(6),N(6)-trimethyl-L-lysyl-[protein] + 3 S-adenosyl-L-homocysteine + 3 H(+). Its function is as follows. Methylates ribosomal protein L11. This is Ribosomal protein L11 methyltransferase from Clostridium kluyveri (strain NBRC 12016).